The following is a 151-amino-acid chain: Large ribosomal subunit protein bL9 (151 aa).

It belongs to the bacterial ribosomal protein bL9 family.

Functionally, binds to the 23S rRNA. The polypeptide is Large ribosomal subunit protein bL9 (Francisella philomiragia subsp. philomiragia (strain ATCC 25017 / CCUG 19701 / FSC 153 / O#319-036)).